A 323-amino-acid chain; its full sequence is rRNA 2'-O-methyltransferase fibrillarin (323 aa).

The disordered stretch occupies residues 1-80 (MGFERGGRGG…AKGGAAGKKV (80 aa)). Arg5, Arg8, Arg12, Arg16, Arg23, Arg26, Arg30, Arg34, Arg41, Arg47, Arg49, Arg53, Arg57, Arg62, Arg64, and Arg68 each carry asymmetric dimethylarginine. Over residues 8–76 (RGGARGGGRG…ARGGAKGGAA (69 aa)) the composition is skewed to gly residues. S-adenosyl-L-methionine contacts are provided by residues 174–175 (TS), 193–194 (EF), 218–219 (DA), and 238–241 (DVAQ).

It belongs to the methyltransferase superfamily. Fibrillarin family. In terms of assembly, component of box C/D small nucleolar ribonucleoprotein (snoRNP) particles. Post-translationally, by homology to other fibrillarins, some or all of the N-terminal domain arginines are modified to asymmetric dimethylarginine (DMA).

The protein localises to the nucleus. It is found in the nucleolus. It carries out the reaction L-glutaminyl-[histone H2A] + S-adenosyl-L-methionine = N(5)-methyl-L-glutaminyl-[histone H2A] + S-adenosyl-L-homocysteine + H(+). S-adenosyl-L-methionine-dependent methyltransferase that has the ability to methylate both RNAs and proteins. Involved in pre-rRNA processing. Utilizes the methyl donor S-adenosyl-L-methionine to catalyze the site-specific 2'-hydroxyl methylation of ribose moieties in pre-ribosomal RNA. Site specificity is provided by a guide RNA that base pairs with the substrate. Methylation occurs at a characteristic distance from the sequence involved in base pairing with the guide RNA. Also acts as a protein methyltransferase by mediating methylation of 'Gln-105' of histone H2A (H2AQ105me), a modification that impairs binding of the FACT complex and is specifically present at 35S ribosomal DNA locus. The protein is rRNA 2'-O-methyltransferase fibrillarin (nop-1) of Neurospora crassa (strain ATCC 24698 / 74-OR23-1A / CBS 708.71 / DSM 1257 / FGSC 987).